The chain runs to 84 residues: Toxin Acra3 (84 aa).

The first 17 residues, methionine 1 to serine 17, serve as a signal peptide directing secretion. The 64-residue stretch at arginine 19–lysine 82 folds into the LCN-type CS-alpha/beta domain. 4 disulfides stabilise this stretch: cysteine 30–cysteine 81, cysteine 34–cysteine 57, cysteine 43–cysteine 62, and cysteine 47–cysteine 64. Serine 83 carries the serine amide modification.

The protein belongs to the long (4 C-C) scorpion toxin superfamily. Sodium channel inhibitor family. Beta subfamily. As to expression, expressed by the venom gland.

The protein resides in the secreted. In terms of biological role, toxin with unknown target. In vivo, induces severe neurotoxic events in mice such as excitability and convulsions, leading to the death of the animals within a few minutes after injection. Exerts very strong cytotoxic effect on a mouse brain tumor cell line (BC3H1) (IC(50)=5 mg/ml). It exerts its effects by inducing a stronger necrosis than apoptosis in BC3H1 cells. The chain is Toxin Acra3 from Androctonus crassicauda (Arabian fat-tailed scorpion).